We begin with the raw amino-acid sequence, 325 residues long: RNA ligase 1 (325 aa).

It depends on Mg(2+) as a cofactor. Requires Mn(2+) as cofactor. AMPylates itself (auto-AMPylation).

The enzyme catalyses ATP + (ribonucleotide)n-3'-hydroxyl + 5'-phospho-(ribonucleotide)m = (ribonucleotide)n+m + AMP + diphosphate.. Functionally, functions as an RNA ligase, in vitro. The ligation reaction entails three nucleotidyl transfer steps. In the first step, the RNA ligase reacts with ATP in the absence of nucleic acid to form a covalent ligase-AMP intermediate and release pyrophosphate. In step 2, the ligase-AMP binds to the nucleic acid and transfers the adenylate to the 5'-PO4 terminus to form an adenylylated intermediate. In step 3, the RNA ligase directs the attack of the 3'-OH on the 5'-phosphoanhydride linkage, resulting in a repaired 3'-5' phosphodiester and release of AMP. Exhibits selectivity for single-stranded RNA substrates and may not have nick-sealing activity on double-stranded DNA-RNA hybrids. May play a role in maintaining RNA integrity under stress conditions, for example in response to reactive oxygen species (ROS). In Rattus norvegicus (Rat), this protein is RNA ligase 1.